The chain runs to 468 residues: Pancreatic lipase-related protein 2 (468 aa).

A signal peptide spans 1–16 (MLLCWIVSLLLATVGG). A disulfide bond links C20 and C26. Residues 92–104 (VHGFIDKGEDGWL) are required for galactolipase activity. Residues C108 and C119 are joined by a disulfide bond. Catalysis depends on S170, which acts as the Nucleophile. D194 acts as the Charge relay system in catalysis. E205, R208, D210, and D213 together coordinate Ca(2+). The cysteines at positions 255 and 279 are disulfide-linked. A required for galactolipase activity region spans residues 256 to 278 (QKNILSTIVDINGIWEGTQNFVA). H281 acts as the Charge relay system in catalysis. 2 cysteine pairs are disulfide-bonded: C303-C314 and C317-C322. N-linked (GlcNAc...) asparagine glycans are attached at residues N352 and N427. The region spanning 356 to 468 (WRYKVSVTLS…EDVLQSLYPC (113 aa)) is the PLAT domain. The cysteines at positions 452 and 468 are disulfide-linked.

Belongs to the AB hydrolase superfamily. Lipase family. As to expression, expressed in pancreatic acinar cells (at protein level).

Its subcellular location is the secreted. The protein localises to the zymogen granule membrane. It localises to the cell projection. It is found in the neuron projection. The catalysed reaction is a triacylglycerol + H2O = a diacylglycerol + a fatty acid + H(+). It carries out the reaction a 1,2-diacyl-3-O-(beta-D-galactosyl)-sn-glycerol + 2 H2O = 3-beta-D-galactosyl-sn-glycerol + 2 a fatty acid + 2 H(+). It catalyses the reaction 1,2,3-tri-(9Z-octadecenoyl)-glycerol + H2O = di-(9Z)-octadecenoylglycerol + (9Z)-octadecenoate + H(+). The enzyme catalyses di-(9Z)-octadecenoylglycerol + H2O = (9Z-octadecenoyl)-glycerol + (9Z)-octadecenoate + H(+). The catalysed reaction is (9Z-octadecenoyl)-glycerol + H2O = glycerol + (9Z)-octadecenoate + H(+). It carries out the reaction 1-(9Z-octadecenoyl)-glycerol + H2O = glycerol + (9Z)-octadecenoate + H(+). It catalyses the reaction 1,2,3-tripropanoylglycerol + H2O = dipropanoylglycerol + propanoate + H(+). The enzyme catalyses 1,2,3-tributanoylglycerol + H2O = dibutanoylglycerol + butanoate + H(+). The catalysed reaction is 1,2,3-trioctanoylglycerol + H2O = dioctanoylglycerol + octanoate + H(+). It carries out the reaction 1,2-didecanoylglycerol + H2O = decanoylglycerol + decanoate + H(+). It catalyses the reaction long chain 1,2-diacyl-3-O-beta-D-galactosyl-sn-glycerol + H2O = long chain acyl-3-O-beta-D-galactosyl-sn-glycerol + a fatty acid + H(+). The enzyme catalyses 1,2-dioctanoyl-3-O-beta-D-galactosyl-sn-glycerol + H2O = octanoyl-3-(beta-D-galactosyl)-sn-glycerol + octanoate + H(+). The catalysed reaction is 1,2-didodecanoyl-3-beta-D-galactosyl-sn-glycerol + H2O = dodecanoyl-3-beta-D-galactosyl-sn-glycerol + dodecanoate + H(+). It carries out the reaction 1-beta-D-galactosyl-2,3-didodecanoyl-sn-glycerol + H2O = 1-beta-D-galactosyl-dodecanoyl-sn-glycerol + dodecanoate + H(+). It catalyses the reaction a 1,2-diacyl-3-O-[alpha-D-galactosyl-(1-&gt;6)-beta-D-galactosyl]-sn-glycerol + H2O = acyl-3-O-[alpha-D-galactosyl-(1-&gt;6)-beta-D-galactosyl]-sn-glycerol + a fatty acid + H(+). The enzyme catalyses long chain 1,2-diacyl-3-O-[alpha-D-galactosyl-(1-&gt;6)-beta-D-galactosyl]-sn-glycerol + H2O = long chain acyl-3-O-[alpha-D-galactosyl-(1-&gt;6)-beta-D-galactosyl]-sn-glycerol + a fatty acid + H(+). The catalysed reaction is 1,2-dioctanoyl-3-O-[alpha-D-galactosyl-(1-&gt;6)-beta-D-galactosyl]-sn-glycerol + H2O = octanoyl-3-O-[alpha-D-galactosyl-(1-&gt;6)-beta-D-galactosyl]-sn-glycerol + octanoate + H(+). It carries out the reaction 1,2-didodecanoyl-3-O-[alpha-D-galactosyl-(1-&gt;6)-beta-D-galactosyl]-sn-glycerol + H2O = dodecanoyl-3-O-[alpha-D-galactosyl-(1-&gt;6)-beta-D-galactosyl]-sn-glycerol + dodecanoate + H(+). It catalyses the reaction a 1,2-diacyl-sn-glycero-3-phosphocholine + H2O = a monoacyl-sn-glycero-3-phosphocholine + a fatty acid + H(+). It functions in the pathway glycerolipid metabolism; triacylglycerol degradation. It participates in glycolipid metabolism. CLPS stimulates triacylglycerol lipase activity. Triacylglycerol lipase activity is not inhibited by increasing bile salt concentration. Its function is as follows. Lipase that primarily hydrolyzes triglycerides and galactosylglycerides. In neonates, may play a major role in pancreatic digestion of dietary fats such as milk fat globules enriched in long-chain triglycerides. Hydrolyzes short-, medium- and long-chain fatty acyls in triglycerides without apparent positional specificity. Can completely deacylate triacylglycerols. When the liver matures and bile salt synthesis increases, likely functions mainly as a galactolipase and monoacylglycerol lipase. Hydrolyzes monogalactosyldiglycerols (MGDG) and digalactosyldiacylglycerols (DGDG) present in a plant-based diet, releasing long-chain polyunsaturated fatty acids. Hydrolyzes medium- and long-chain fatty acyls in galactolipids. May act together with LIPF to hydrolyze partially digested triglycerides. Hydrolyzes long-chain monoglycerides with high efficiency. In cytotoxic T cells, contributes to perforin-dependent cell lysis, but is unlikely to mediate direct cytotoxicity. Also has low phospholipase activity. In neurons, required for the localization of the phospholipid 1-oleoyl-2-palmitoyl-PC (OPPC) to neurite tips through acyl chain remodeling of membrane phospholipids. The resulting OPPC-rich lipid membrane domain recruits the t-SNARE protein STX4 by selectively interacting with the STX4 transmembrane domain and this promotes surface expression of the dopamine transporter SLC6A3/DAT at neurite tips by facilitating fusion of SLC6A3-containing transport vesicles with the plasma membrane. The sequence is that of Pancreatic lipase-related protein 2 from Rattus norvegicus (Rat).